We begin with the raw amino-acid sequence, 181 residues long: Alkyl hydroperoxide reductase AhpD (181 aa).

C131 functions as the Proton donor in the catalytic mechanism. Residues C131 and C134 are joined by a disulfide bond. The Cysteine sulfenic acid (-SOH) intermediate role is filled by C134.

This sequence belongs to the AhpD family.

The enzyme catalyses N(6)-[(R)-dihydrolipoyl]-L-lysyl-[lipoyl-carrier protein] + a hydroperoxide = N(6)-[(R)-lipoyl]-L-lysyl-[lipoyl-carrier protein] + an alcohol + H2O. Functionally, antioxidant protein with alkyl hydroperoxidase activity. Required for the reduction of the AhpC active site cysteine residues and for the regeneration of the AhpC enzyme activity. The chain is Alkyl hydroperoxide reductase AhpD from Bradyrhizobium sp. (strain BTAi1 / ATCC BAA-1182).